The sequence spans 227 residues: tRNA (guanine-N(1)-)-methyltransferase (227 aa).

Residues Gly107 and 127-132 (LGDFIL) each bind S-adenosyl-L-methionine.

Belongs to the RNA methyltransferase TrmD family. In terms of assembly, homodimer.

It is found in the cytoplasm. The enzyme catalyses guanosine(37) in tRNA + S-adenosyl-L-methionine = N(1)-methylguanosine(37) in tRNA + S-adenosyl-L-homocysteine + H(+). Functionally, specifically methylates guanosine-37 in various tRNAs. The chain is tRNA (guanine-N(1)-)-methyltransferase from Mesomycoplasma hyopneumoniae (strain 7448) (Mycoplasma hyopneumoniae).